Consider the following 160-residue polypeptide: SsrA-binding protein (160 aa).

A disordered region spans residues Lys132–Glu160. Basic and acidic residues predominate over residues Asp135–Gln146.

The protein belongs to the SmpB family.

The protein localises to the cytoplasm. In terms of biological role, required for rescue of stalled ribosomes mediated by trans-translation. Binds to transfer-messenger RNA (tmRNA), required for stable association of tmRNA with ribosomes. tmRNA and SmpB together mimic tRNA shape, replacing the anticodon stem-loop with SmpB. tmRNA is encoded by the ssrA gene; the 2 termini fold to resemble tRNA(Ala) and it encodes a 'tag peptide', a short internal open reading frame. During trans-translation Ala-aminoacylated tmRNA acts like a tRNA, entering the A-site of stalled ribosomes, displacing the stalled mRNA. The ribosome then switches to translate the ORF on the tmRNA; the nascent peptide is terminated with the 'tag peptide' encoded by the tmRNA and targeted for degradation. The ribosome is freed to recommence translation, which seems to be the essential function of trans-translation. The sequence is that of SsrA-binding protein from Leptospira borgpetersenii serovar Hardjo-bovis (strain JB197).